The chain runs to 276 residues: MSLRPFETPGGLSSLSPRRRDFSPTRPGTNGPSAKLEHVTERFAGLWTDLEQEKQNKRIQESTRFSLLQESLQRIEKSVEAEVKRRAESDKQLQSHFEGEIKTLQERQLQQFTDLQLALKSAVESLNQRITDLHALVRDERESRRSDIEHLATSLVGKVNECVAAIDEERNGRVQEQTVSMKRVGEDLMLLSQRLDTEKNTRDSEVSALRAEVHDAIGNRNLADDQFKGAVLDEVAGLKAALALEREERIAEDDEIVQAVNDYTKALQEGLKLVSA.

The segment at 1-31 (MSLRPFETPGGLSSLSPRRRDFSPTRPGTNG) is nonhelical region. The segment at 1–37 (MSLRPFETPGGLSSLSPRRRDFSPTRPGTNGPSAKLE) is disordered. Positions 32–276 (PSAKLEHVTE…LQEGLKLVSA (245 aa)) are rod. A coiled-coil region spans residues 67 to 145 (LLQESLQRIE…LVRDERESRR (79 aa)).

This sequence belongs to the SF-assemblin family.

The protein localises to the cytoplasm. The protein resides in the cytoskeleton. Major component of the striated microtubule-associated fibers (SMAFs; system-I-fibers). The sequence is that of SF-assemblin from Chlamydomonas reinhardtii (Chlamydomonas smithii).